We begin with the raw amino-acid sequence, 1077 residues long: MDTDSQRSHLSSFTMKLMDKFHSPKIKRTPSKKGKPAEVSVKIPEKPVNKEATDRFLPEGYPLPLDLEQQAVEFMSTSAVASRSQRQKNLSWLEEKEKEVVSALRYFKTIVDKMAIDKKVLEMLPGSASKVLEAILPLVQNDPRIQHSSALSSCYSRVYQSLANLIRWSDQVMLEGVNSEDKEMVTTVKGVIKAVLDGVKELVRLTIEKQGRPSPTSPVKPSSPASKPDGPAELPLTDREVEILNKTTGMSQSTELLPDATDEEVAPPKPPLPGIRVVDNSPPPALPPKKRQSAPSPTRVAVVAPMSRATSGSSLPVGINRQDFDVDCYAQRRLSGGSHSYGGESPRLSPCSSIGKLSKSDEQLSSLDRDSGQCSRNTSCETLDHYDPDYEFLQQDLSNADQIPQQTAWNLSPLPESLGESGSPFLGPPFQLPLGGHPQPDGPLAPGQQTDTPPALPEKKRRSAASQTADGSGCRVSYERHPSQYDNISGEDLQSTAPIPSVPYAPFAAILPFQHGGSSAPVEFVGDFTAPESTGDPEKPPPLPEKKNKHMLAYMQLLEDYSEPQPSMFYQTPQNEHIYQQKNKLLMEVYGFSDSFSGVDSVQELAPPPALPPKQRQLEPPAGKDGHPRDPSAVSGVPGKDSRDGSERAPKSPDALESAQSEEEVDELSLIDHNEIMSRLTLKQEGDDGPDVRGGSGDILLVHATETDRKDLVLYCEAFLTTYRTFISPEELIKKLQYRYEKFSPFADTFKKRVSKNTFFVLVRVVDELCLVELTEEILKLLMELVFRLVCNGELSLARVLRKNILDKVDQKKLLRCATSSQPLAARGVAARPGTLHDFHSHEIAEQLTLLDAELFYKIEIPEVLLWAKEQNEEKSPNLTQFTEHFNNMSYWVRSIIMLQEKAQDRERLLLKFIKIMKHLRKLNNFNSYLAILSALDSAPIRRLEWQKQTSEGLAEYCTLIDSSSSFRAYRAALSEVEPPCIPYLGLILQDLTFVHLGNPDYIDGKVNFSKRWQQFNILDSMRCFQQAHYDMRRNDDIINFFNDFSDHLAEEALWELSLKIKPRNITRRKTDREEKT.

Residue leucine 57 forms a Glycyl lysine isopeptide (Lys-Gly) (interchain with G-Cter in SUMO2) linkage. 2 disordered regions span residues 207–235 (IEKQ…AELP) and 248–300 (TGMS…PTRV). Residues 213–228 (PSPTSPVKPSSPASKP) show a composition bias toward low complexity. Phosphoserine occurs at positions 281, 293, 314, 335, and 360. The SH3-binding motif lies at 281–292 (SPPPALPPKKRQ). Disordered stretches follow at residues 336–376 (GGSH…QCSR) and 411–494 (LSPL…EDLQ). The segment covering 358–371 (SKSDEQLSSLDRDS) has biased composition (basic and acidic residues). An SH3-binding motif is present at residues 451-462 (DTPPALPEKKRR). Over residues 484–494 (QYDNISGEDLQ) the composition is skewed to polar residues. Phosphotyrosine; by HCK is present on tyrosine 504. Short sequence motifs (SH3-binding) lie at residues 538-549 (EKPPPLPEKKNK) and 606-617 (APPPALPPKQRQ). The disordered stretch occupies residues 600–670 (DSVQELAPPP…SEEEVDELSL (71 aa)). Basic and acidic residues predominate over residues 640-651 (KDSRDGSERAPK). The segment covering 660–669 (QSEEEVDELS) has biased composition (acidic residues). The region spanning 688-810 (DGPDVRGGSG…LRKNILDKVD (123 aa)) is the N-terminal Ras-GEF domain. Positions 840 to 1064 (HSHEIAEQLT…WELSLKIKPR (225 aa)) constitute a Ras-GEF domain.

Interacts with HCK (via SH3-binding sites). Interacts with CRK (via SH3-binding sites). Phosphorylation at Tyr-504 enhances activity as Rap guanine nucleotide exchange factor. In terms of tissue distribution, ubiquitously expressed in adult and fetus. Expression is high in adult skeletal muscle and placenta and in fetal brain and heart. Low levels of expression in adult and fetal liver.

Its subcellular location is the early endosome. Guanine nucleotide-releasing protein that binds to SH3 domain of CRK and GRB2/ASH. Transduces signals from CRK to activate RAS. Involved in cell branching and adhesion mediated by BCAR1-CRK-RAPGEF1 signaling and activation of RAP1. Plays a role in the establishment of basal endothelial barrier function. Plays a role in nerve growth factor (NGF)-induced sustained activation of Rap1 and neurite outgrowth. In Homo sapiens (Human), this protein is Rap guanine nucleotide exchange factor 1 (RAPGEF1).